The chain runs to 167 residues: Cytochrome c-type biogenesis protein CcmE (167 aa).

At 1-7 (MTRKQRR) the chain is on the cytoplasmic side. The chain crosses the membrane as a helical; Signal-anchor for type II membrane protein span at residues 8–28 (LLMIGGAGVVLIVAVGLVLNA). At 29–167 (LRDSIVFFST…TSANAAEGGK (139 aa)) the chain is on the periplasmic side. Heme contacts are provided by H122 and Y126. Residues 137–150 (KDGHWKDDYGKKSP) show a composition bias toward basic and acidic residues. The tract at residues 137-167 (KDGHWKDDYGKKSPGETTAGQTSANAAEGGK) is disordered. Residues 151–161 (GETTAGQTSAN) are compositionally biased toward polar residues.

It belongs to the CcmE/CycJ family.

It is found in the cell inner membrane. Functionally, heme chaperone required for the biogenesis of c-type cytochromes. Transiently binds heme delivered by CcmC and transfers the heme to apo-cytochromes in a process facilitated by CcmF and CcmH. This chain is Cytochrome c-type biogenesis protein CcmE, found in Rhodopseudomonas palustris (strain ATCC BAA-98 / CGA009).